The following is a 215-amino-acid chain: MGKKVLLTGFDPFGGETVNPSWEAVKRLNGEEAEGVSIAAEQIPTVFHHSAAVLKKAIEKHKPDVVICAGQAGGRAHITPERIAINIDDARIPDNEDREPIDEPIAADGPAAYWSALPIKLIVKELRKNGIPASVSNSAGTFVCNHLFYQLMHRIDRTSANIRGGFIHIPFLPEQTIDKPEPSLSLETIVEGLRIAAVISALHEKDIRETGGSIS.

Residues E81, C144, and H168 contribute to the active site.

The protein belongs to the peptidase C15 family. In terms of assembly, homotetramer.

The protein resides in the cytoplasm. The catalysed reaction is Release of an N-terminal pyroglutamyl group from a polypeptide, the second amino acid generally not being Pro.. Functionally, removes 5-oxoproline from various penultimate amino acid residues except L-proline. The chain is Pyrrolidone-carboxylate peptidase from Bacillus licheniformis (strain ATCC 14580 / DSM 13 / JCM 2505 / CCUG 7422 / NBRC 12200 / NCIMB 9375 / NCTC 10341 / NRRL NRS-1264 / Gibson 46).